A 169-amino-acid chain; its full sequence is Endoribonuclease YbeY (169 aa).

Residues H130, H134, and H140 each coordinate Zn(2+).

Belongs to the endoribonuclease YbeY family. It depends on Zn(2+) as a cofactor.

It is found in the cytoplasm. Single strand-specific metallo-endoribonuclease involved in late-stage 70S ribosome quality control and in maturation of the 3' terminus of the 16S rRNA. This is Endoribonuclease YbeY from Neisseria meningitidis serogroup B (strain ATCC BAA-335 / MC58).